Consider the following 262-residue polypeptide: Dihydroorotate dehydrogenase B (NAD(+)), electron transfer subunit (262 aa).

An FAD-binding FR-type domain is found at 3–104 (KLQEMMTIVS…MGPLGNGFPV (102 aa)). FAD contacts are provided by residues 53–56 (RPIS), 70–72 (LYR), and 79–80 (GT). Positions 226, 231, 234, and 249 each coordinate [2Fe-2S] cluster.

This sequence belongs to the PyrK family. As to quaternary structure, heterotetramer of 2 PyrK and 2 PyrD type B subunits. [2Fe-2S] cluster is required as a cofactor. The cofactor is FAD.

The protein operates within pyrimidine metabolism; UMP biosynthesis via de novo pathway; orotate from (S)-dihydroorotate (NAD(+) route): step 1/1. Functionally, responsible for channeling the electrons from the oxidation of dihydroorotate from the FMN redox center in the PyrD type B subunit to the ultimate electron acceptor NAD(+). The polypeptide is Dihydroorotate dehydrogenase B (NAD(+)), electron transfer subunit (Lactococcus lactis subsp. lactis (strain IL1403) (Streptococcus lactis)).